Consider the following 148-residue polypeptide: Large ribosomal subunit protein bL9 (148 aa).

The protein belongs to the bacterial ribosomal protein bL9 family.

Its function is as follows. Binds to the 23S rRNA. This chain is Large ribosomal subunit protein bL9, found in Bifidobacterium adolescentis (strain ATCC 15703 / DSM 20083 / NCTC 11814 / E194a).